We begin with the raw amino-acid sequence, 1137 residues long: 2'-5'-oligoadenylate synthase 3 (1137 aa).

An N-acetylmethionine modification is found at Met1. The segment at 6–341 is OAS domain 1; it reads TPAGALDKLV…GALVQPWEGP (336 aa). 2 interaction with dsRNA regions span residues 12–56 and 185–199; these read DKLV…VIRI and ELRK…VKLK. Residues 342-461 form a linker region; that stretch reads GLPCAGILDL…GSQMGPDLSQ (120 aa). Positions 434 to 453 are enriched in polar residues; sequence QSTASSNTPPGHSSMSTAGS. The disordered stretch occupies residues 434 to 462; it reads QSTASSNTPPGHSSMSTAGSQMGPDLSQI. OAS domain stretches follow at residues 462-792 and 800-1134; these read IPSK…PWDV and TPAQ…WPVK. Ser854 serves as a coordination point for ATP. Residues Asp866, Asp868, and Asp938 each coordinate Mg(2+). 3 residues coordinate ATP: Arg997, Lys1000, and Gln1019.

It belongs to the 2-5A synthase family. Monomer. Requires Mg(2+) as cofactor.

The protein localises to the cytoplasm. It localises to the nucleus. It catalyses the reaction 3 ATP = 5'-triphosphoadenylyl-(2'-&gt;5')-adenylyl-(2'-&gt;5')-adenosine + 2 diphosphate. With respect to regulation, produced as a latent enzyme which is activated by dsRNA generated during the course of viral infection. Strongly activated by long dsRNAs at least 50 nucleotides in length. ssRNA does not activate the enzyme. Interferon-induced, dsRNA-activated antiviral enzyme which plays a critical role in cellular innate antiviral response. In addition, it may also play a role in other cellular processes such as apoptosis, cell growth, differentiation and gene regulation. Synthesizes preferentially dimers of 2'-5'-oligoadenylates (2-5A) from ATP which then bind to the inactive monomeric form of ribonuclease L (RNase L) leading to its dimerization and subsequent activation. Activation of RNase L leads to degradation of cellular as well as viral RNA, resulting in the inhibition of protein synthesis, thus terminating viral replication. Can mediate the antiviral effect via the classical RNase L-dependent pathway or an alternative antiviral pathway independent of RNase L. The polypeptide is 2'-5'-oligoadenylate synthase 3 (Oas3) (Rattus norvegicus (Rat)).